Here is a 182-residue protein sequence, read N- to C-terminus: MKEIRIHGRGGQGSVTAAEMLSVAAFEDGKFSQAFPAFGVERRGAPVQAFTRINNNPIRLRSQVYTPDYVIVQDATLLETVDVASGVKDDGIIIVNTTENPESLKLNTKARVMTVDATKVAMDIIGVPIVNTVLLGAFAGATGEINVESIQHAIRARFSGKVGEKNANAIQKAYKLIRGEEA.

In terms of assembly, heterotetramer of one alpha, one beta, one delta and one gamma chain.

The enzyme catalyses 2 oxidized [2Fe-2S]-[ferredoxin] + pyruvate + CoA = 2 reduced [2Fe-2S]-[ferredoxin] + acetyl-CoA + CO2 + H(+). The polypeptide is Pyruvate synthase subunit PorC (porC) (Methanosarcina barkeri (strain Fusaro / DSM 804)).